Reading from the N-terminus, the 262-residue chain is Global transcriptional regulator CodY (262 aa).

Positions 1–159 (MATLLEKTRK…ATTVIGVQLS (159 aa)) are GAF domain. Positions 207-226 (ASVIADKIGITRSVIVNALR) form a DNA-binding region, H-T-H motif.

It belongs to the CodY family.

Its subcellular location is the cytoplasm. DNA-binding global transcriptional regulator which is involved in the adaptive response to starvation and acts by directly or indirectly controlling the expression of numerous genes in response to nutrient availability. During rapid exponential growth, CodY is highly active and represses genes whose products allow adaptation to nutrient depletion. This is Global transcriptional regulator CodY from Lactococcus lactis subsp. cremoris (strain SK11).